We begin with the raw amino-acid sequence, 138 residues long: Large ribosomal subunit protein uL16 (138 aa).

Residues 1–13 are compositionally biased toward basic residues; the sequence is MLQPKRRKYRKEQ. The segment at 1 to 24 is disordered; it reads MLQPKRRKYRKEQKGRNTGKATRG.

It belongs to the universal ribosomal protein uL16 family. As to quaternary structure, part of the 50S ribosomal subunit.

Its function is as follows. Binds 23S rRNA and is also seen to make contacts with the A and possibly P site tRNAs. This Burkholderia ambifaria (strain ATCC BAA-244 / DSM 16087 / CCUG 44356 / LMG 19182 / AMMD) (Burkholderia cepacia (strain AMMD)) protein is Large ribosomal subunit protein uL16.